A 673-amino-acid polypeptide reads, in one-letter code: UvrABC system protein B (673 aa).

The 389-residue stretch at 26–414 (EGLEDGLAHQ…GDEVVDQVVR (389 aa)) folds into the Helicase ATP-binding domain. An ATP-binding site is contributed by 39 to 46 (GVTGSGKT). The short motif at 92 to 115 (YYDYYQPEAYVPSSDTFIEKDASV) is the Beta-hairpin element. The Helicase C-terminal domain maps to 431–597 (QVDDLLSEIR…GLNKKVVDIL (167 aa)). Residues 633–668 (QQKIHELEEQMMQHAQNLEFEEAAQIRDQLHQLREL) enclose the UVR domain.

Belongs to the UvrB family. As to quaternary structure, forms a heterotetramer with UvrA during the search for lesions. Interacts with UvrC in an incision complex.

It is found in the cytoplasm. Its function is as follows. The UvrABC repair system catalyzes the recognition and processing of DNA lesions. A damage recognition complex composed of 2 UvrA and 2 UvrB subunits scans DNA for abnormalities. Upon binding of the UvrA(2)B(2) complex to a putative damaged site, the DNA wraps around one UvrB monomer. DNA wrap is dependent on ATP binding by UvrB and probably causes local melting of the DNA helix, facilitating insertion of UvrB beta-hairpin between the DNA strands. Then UvrB probes one DNA strand for the presence of a lesion. If a lesion is found the UvrA subunits dissociate and the UvrB-DNA preincision complex is formed. This complex is subsequently bound by UvrC and the second UvrB is released. If no lesion is found, the DNA wraps around the other UvrB subunit that will check the other stand for damage. This chain is UvrABC system protein B, found in Salmonella typhi.